We begin with the raw amino-acid sequence, 795 residues long: Protein translocase subunit SecA 2 (795 aa).

ATP is bound by residues Q84, 102 to 106 (GEGKT), and D496.

Belongs to the SecA family. As to quaternary structure, monomer and homodimer. Part of the essential Sec protein translocation apparatus which comprises SecA, SecYEG and auxiliary proteins SecDF. Other proteins may also be involved.

It localises to the cell membrane. It is found in the cytoplasm. It carries out the reaction ATP + H2O + cellular proteinSide 1 = ADP + phosphate + cellular proteinSide 2.. Part of the Sec protein translocase complex. Interacts with the SecYEG preprotein conducting channel. Has a central role in coupling the hydrolysis of ATP to the transfer of proteins into and across the cell membrane, serving as an ATP-driven molecular motor driving the stepwise translocation of polypeptide chains across the membrane. This Streptococcus agalactiae serotype III (strain NEM316) protein is Protein translocase subunit SecA 2.